The primary structure comprises 176 residues: ATP-dependent protease subunit HslV (176 aa).

The active site involves T2. Positions 157, 160, and 163 each coordinate Na(+).

It belongs to the peptidase T1B family. HslV subfamily. As to quaternary structure, a double ring-shaped homohexamer of HslV is capped on each side by a ring-shaped HslU homohexamer. The assembly of the HslU/HslV complex is dependent on binding of ATP.

Its subcellular location is the cytoplasm. It catalyses the reaction ATP-dependent cleavage of peptide bonds with broad specificity.. Allosterically activated by HslU binding. In terms of biological role, protease subunit of a proteasome-like degradation complex believed to be a general protein degrading machinery. This chain is ATP-dependent protease subunit HslV, found in Buchnera aphidicola subsp. Schizaphis graminum (strain Sg).